Here is a 193-residue protein sequence, read N- to C-terminus: MRLCDRDIEAWLDSGKLGIEPRPPVERINGATVDVRLGNQFRVFRGHTAAFIDLSGPKDEVSAALERVMSDEINLPEGEAFFLHPGELALAVTLESVTIPDDLVGWLDGRSSLARLGLMVHVTAHRIDPGWQGRIVLEFYNSGKLPLALRPGMLIGALSFEPLSGPAARPYNSRQDAKYRGQQGAVASRIDKD.

DCTP-binding positions include 110–115 (RSSLAR), Asp-128, 136–138 (VLE), Tyr-171, Lys-178, and Gln-182. Glu-138 (proton donor/acceptor) is an active-site residue. Positions 169-193 (RPYNSRQDAKYRGQQGAVASRIDKD) are disordered.

It belongs to the dCTP deaminase family. Homotrimer.

It carries out the reaction dCTP + H2O + H(+) = dUTP + NH4(+). It participates in pyrimidine metabolism; dUMP biosynthesis; dUMP from dCTP (dUTP route): step 1/2. In terms of biological role, catalyzes the deamination of dCTP to dUTP. In Yersinia pestis bv. Antiqua (strain Antiqua), this protein is dCTP deaminase.